We begin with the raw amino-acid sequence, 294 residues long: 4-hydroxy-tetrahydrodipicolinate synthase (294 aa).

Thr45 provides a ligand contact to pyruvate. The active-site Proton donor/acceptor is the Tyr133. Residue Lys162 is the Schiff-base intermediate with substrate of the active site. Ile204 contacts pyruvate.

Belongs to the DapA family. In terms of assembly, homotetramer; dimer of dimers.

The protein resides in the cytoplasm. The catalysed reaction is L-aspartate 4-semialdehyde + pyruvate = (2S,4S)-4-hydroxy-2,3,4,5-tetrahydrodipicolinate + H2O + H(+). It participates in amino-acid biosynthesis; L-lysine biosynthesis via DAP pathway; (S)-tetrahydrodipicolinate from L-aspartate: step 3/4. With respect to regulation, is allosterically regulated by the feedback inhibitor (S)-lysine. In terms of biological role, catalyzes the condensation of (S)-aspartate-beta-semialdehyde [(S)-ASA] and pyruvate to 4-hydroxy-tetrahydrodipicolinate (HTPA). The chain is 4-hydroxy-tetrahydrodipicolinate synthase from Agrobacterium fabrum (strain C58 / ATCC 33970) (Agrobacterium tumefaciens (strain C58)).